The sequence spans 404 residues: Cysteine desulfurase IscS (404 aa).

Pyridoxal 5'-phosphate-binding positions include 75–76, asparagine 155, glutamine 183, and 203–205; these read AT and SAH. Position 206 is an N6-(pyridoxal phosphate)lysine (lysine 206). Pyridoxal 5'-phosphate is bound at residue threonine 243. The Cysteine persulfide intermediate role is filled by cysteine 328. A [2Fe-2S] cluster-binding site is contributed by cysteine 328.

This sequence belongs to the class-V pyridoxal-phosphate-dependent aminotransferase family. NifS/IscS subfamily. As to quaternary structure, homodimer. Forms a heterotetramer with IscU, interacts with other sulfur acceptors. It depends on pyridoxal 5'-phosphate as a cofactor.

The protein resides in the cytoplasm. The catalysed reaction is (sulfur carrier)-H + L-cysteine = (sulfur carrier)-SH + L-alanine. Its pathway is cofactor biosynthesis; iron-sulfur cluster biosynthesis. Master enzyme that delivers sulfur to a number of partners involved in Fe-S cluster assembly, tRNA modification or cofactor biosynthesis. Catalyzes the removal of elemental sulfur atoms from cysteine to produce alanine. Functions as a sulfur delivery protein for Fe-S cluster synthesis onto IscU, an Fe-S scaffold assembly protein, as well as other S acceptor proteins. This chain is Cysteine desulfurase IscS, found in Neisseria meningitidis serogroup C (strain 053442).